The following is a 268-amino-acid chain: Virulence plasmid ParA family protein pGP5-D (268 aa).

13–20 contributes to the ATP binding site; sequence FKGGTGKT.

This sequence belongs to the ParA family.

The chain is Virulence plasmid ParA family protein pGP5-D from Chlamydia muridarum (strain MoPn / Nigg).